The chain runs to 291 residues: Co-chaperone protein DjlA (291 aa).

Residues 1 to 6 (MRYWGK) lie on the Periplasmic side of the membrane. Residues 7 to 31 (LLGLALGIVSSTGIWGMIMGLLMGH) form a helical membrane-spanning segment. The Cytoplasmic portion of the chain corresponds to 32-291 (WIDRARASRR…ELLKSANQTK (260 aa)). Residues 177–223 (ESPTGQQSRQNQSRQNGKSQQRRNNGYSNGHSYGGQRPPSPLRGPTV) form a disordered region. A compositionally biased stretch (low complexity) spans 181 to 211 (GQQSRQNQSRQNGKSQQRRNNGYSNGHSYGG). The 67-residue stretch at 225–291 (SACRTLGVRS…ELLKSANQTK (67 aa)) folds into the J domain.

Homodimer.

The protein localises to the cell inner membrane. Functionally, regulatory DnaK co-chaperone. Direct interaction between DnaK and DjlA is needed for the induction of the wcaABCDE operon, involved in the synthesis of a colanic acid polysaccharide capsule, possibly through activation of the RcsB/RcsC phosphotransfer signaling pathway. The colanic acid capsule may help the bacterium survive conditions outside the host. This is Co-chaperone protein DjlA from Pectobacterium atrosepticum (strain SCRI 1043 / ATCC BAA-672) (Erwinia carotovora subsp. atroseptica).